The following is a 102-amino-acid chain: Integration host factor subunit alpha (102 aa).

It belongs to the bacterial histone-like protein family. In terms of assembly, heterodimer of an alpha and a beta chain.

In terms of biological role, this protein is one of the two subunits of integration host factor, a specific DNA-binding protein that functions in genetic recombination as well as in transcriptional and translational control. The chain is Integration host factor subunit alpha from Albidiferax ferrireducens (strain ATCC BAA-621 / DSM 15236 / T118) (Rhodoferax ferrireducens).